Reading from the N-terminus, the 311-residue chain is Forkhead box protein I2 (311 aa).

The segment at residues 99–193 (RPPYSYSALI…DNGNFRRKRR (95 aa)) is a DNA-binding region (fork-head). Disordered regions lie at residues 188–237 (FRRK…TTTC) and 263–294 (FSLR…QTGA). The span at 219 to 231 (STPQDPQTSPSPS) shows a compositional bias: low complexity.

The protein resides in the nucleus. Possible transcriptional activator. The protein is Forkhead box protein I2 of Mus musculus (Mouse).